The chain runs to 359 residues: Alanine racemase (359 aa).

The Proton acceptor; specific for D-alanine role is filled by lysine 35. Lysine 35 is modified (N6-(pyridoxal phosphate)lysine). A substrate-binding site is contributed by arginine 130. Residue tyrosine 255 is the Proton acceptor; specific for L-alanine of the active site. Methionine 303 contacts substrate.

This sequence belongs to the alanine racemase family. Pyridoxal 5'-phosphate serves as cofactor.

It carries out the reaction L-alanine = D-alanine. It functions in the pathway amino-acid biosynthesis; D-alanine biosynthesis; D-alanine from L-alanine: step 1/1. Catalyzes the interconversion of L-alanine and D-alanine. May also act on other amino acids. The polypeptide is Alanine racemase (alr) (Janthinobacterium sp. (strain Marseille) (Minibacterium massiliensis)).